A 362-amino-acid polypeptide reads, in one-letter code: MDKTSLKPGSTIGIIGGGQLGRMLAMAAARFGYETIILEPQAGCPAAQVANRQIVAAYDDPKALAELAAASDVITYEFENVPVSAADKLAETALVLPPPAALEISQDRFTEKQFLNESGIETAPWRLVDDEETLIAALGALGGRGILKIRRLGYDGKGQVRLASLDETQACNAFAAINKAPAILEGFVEFEREVSVIAARDRSGNVAIFDLAENVHKDGILATSTVPAAISVQTAEAARTAAEKLLHALDYVGVLGLEFFVLKDGTLLANEFAPRVHNSGHWTEAACAISQFEQHIRAVAGLPLGNTDRHSDCVMENLIGDDIEKVPAILCEKNAVLHLYGKKEARAGRKIGHVTRIKPRTI.

Residues arginine 108, lysine 148, 153–159, 185–188, glutamate 193, histidine 216, and 270–271 contribute to the ATP site; these read GYDGKGQ, EGFV, and NE. The region spanning 112 to 300 is the ATP-grasp domain; the sequence is KQFLNESGIE…QFEQHIRAVA (189 aa).

This sequence belongs to the PurK/PurT family. In terms of assembly, homodimer.

It carries out the reaction 5-amino-1-(5-phospho-beta-D-ribosyl)imidazole + hydrogencarbonate + ATP = 5-carboxyamino-1-(5-phospho-D-ribosyl)imidazole + ADP + phosphate + 2 H(+). Its pathway is purine metabolism; IMP biosynthesis via de novo pathway; 5-amino-1-(5-phospho-D-ribosyl)imidazole-4-carboxylate from 5-amino-1-(5-phospho-D-ribosyl)imidazole (N5-CAIR route): step 1/2. Catalyzes the ATP-dependent conversion of 5-aminoimidazole ribonucleotide (AIR) and HCO(3)(-) to N5-carboxyaminoimidazole ribonucleotide (N5-CAIR). The sequence is that of N5-carboxyaminoimidazole ribonucleotide synthase from Brucella melitensis biotype 1 (strain ATCC 23456 / CCUG 17765 / NCTC 10094 / 16M).